Here is a 93-residue protein sequence, read N- to C-terminus: MRCISRLPAVLLILSVALGHLRATPVGSGTNPQVDKRKCNTATCATQRLANFLVRSSNNLGPVLPPTNVGSNTYGKRNVAEDPNRESLDFLLL.

Residues 1–23 (MRCISRLPAVLLILSVALGHLRA) form the signal peptide. A propeptide spanning residues 24 to 35 (TPVGSGTNPQVD) is cleaved from the precursor. An intrachain disulfide couples Cys39 to Cys44. Tyr74 is modified (tyrosine amide). A propeptide spanning residues 78-93 (NVAEDPNRESLDFLLL) is cleaved from the precursor.

Belongs to the calcitonin family. Can form homodimers. Interacts with IDE and INS. Interaction with INS inhibits homodimerization and fibril formation. In terms of tissue distribution, abundant in the islets of Langerhans but is not present in the brain or seven other tissues examined.

Its subcellular location is the secreted. Amylin/IAPP is a glucoregulatory peptide hormone that plays an important role in the regulation of energy homeostasis. Selectively inhibits insulin-stimulated glucose utilization and glycogen deposition in muscle, while not affecting adipocyte glucose metabolism. IAPP function is mediated by the CALCR-RAMPs (AMYRs) receptor complexes. Amylin can also bind CALCR receptor in the absence of RAMPs, although it is more selective for AMYRs. The chain is Islet amyloid polypeptide from Rattus norvegicus (Rat).